Here is a 32-residue protein sequence, read N- to C-terminus: Chaperone protein DnaK (32 aa).

It belongs to the heat shock protein 70 family.

Its function is as follows. Acts as a chaperone. The polypeptide is Chaperone protein DnaK (Anabaena sp. (strain L31)).